The sequence spans 1690 residues: Trinucleotide repeat-containing gene 6C protein (1690 aa).

3 stretches are compositionally biased toward polar residues: residues 1–12, 19–36, and 160–183; these read MATGSAQSSFPS, GSHG…NQSA, and AEPQ…NTDG. Disordered stretches follow at residues 1–42, 158–202, 226–848, and 863–928; these read MATG…AGGT, ESAE…AMQT, PGAN…EPVV, and CKPA…TPGK. A sufficient for interaction with argonaute family proteins region spans residues 1–921; that stretch reads MATGSAQSSF…GNTSKKGLQK (921 aa). Over residues 184 to 198 the composition is skewed to low complexity; sequence PNNTNPMNSSPNPIN. Residues 255–288 show a composition bias toward polar residues; the sequence is NPATGSTNCGFSQGNGDTVNSALSAKQNGSSSAV. The residue at position 313 (Arg313) is an Omega-N-methylarginine. The span at 362 to 374 shows a compositional bias: polar residues; sequence GWDSASAASQTPA. Over residues 384–404 the composition is skewed to low complexity; that stretch reads SWAKATSSGTTASEGSSDGSG. Over residues 415-426 the composition is skewed to basic and acidic residues; that stretch reads GTGEGRRRDKGV. Over residues 444–459 the composition is skewed to polar residues; sequence LSNSGWGQTPVKQNTA. A compositionally biased stretch (basic and acidic residues) spans 464–474; sequence ESPRSERKNDN. Residue Ser465 is modified to Phosphoserine. Composition is skewed to polar residues over residues 482–510, 519–530, 540–551, 644–656, and 663–678; these read IATQ…SGWV, ANTSWGDSNNKA, SISSTAVNNAAA, GTNA…TNWG, and PQQN…NVSN. Ser714 is subject to Phosphoserine. Residues 754-771 are compositionally biased toward low complexity; the sequence is SSTTAPATPTTPTSSSTT. Thr776 carries the phosphothreonine modification. Residues 778–788 are compositionally biased toward polar residues; that stretch reads PSHQAGTQLNR. Positions 901–915 are enriched in low complexity; the sequence is SQESSSSCSSWGNTS. The UBA domain maps to 928 to 973; the sequence is KQDEAWIMSRLIKQLTDMGFPREPAEEALKSNSMNLDQAMSALLEK. The residue at position 1006 (Ser1006) is a Phosphoserine. The stretch at 1156-1214 forms a coiled coil; it reads QLQLAYQRLQIQQQMLQAQRNVSGPMRQQEQQVARTITNLQQQIQQHQRQLAQALLVKQ. 5 disordered regions span residues 1212 to 1337, 1351 to 1380, 1397 to 1421, 1441 to 1486, and 1600 to 1625; these read VKQP…PPGK, QNSE…ISNG, GLQN…PTIN, IKST…PSST, and PPTS…THGL. The span at 1214 to 1223 shows a compositional bias: pro residues; sequence QPPPPPPPPH. The segment at 1260–1690 is silencing domain; interaction with CNOT1 and PAN3; sequence NTFAPYPLAG…PGDLLSGESI (431 aa). A compositionally biased stretch (polar residues) spans 1272-1321; the sequence is PNMNVNSIDMSSGLSVKDPSQSQSRLPQWTHPNSMGNLSSAASPLDQNPS. Residues 1371–1417 are required for interaction with PABPC1; the sequence is KSDSDKISNGSSISWPPEFHPGVPWKGLQNIDPENDPDVTPGSVPTG. The segment at 1371-1690 is sufficient for translational repression when tethered to a target mRNA; sequence KSDSDKISNG…PGDLLSGESI (320 aa). The PABPC1-interacting motif-2 (PAM2) stretch occupies residues 1381-1399; the sequence is SSISWPPEFHPGVPWKGLQ. The segment covering 1441 to 1457 has biased composition (polar residues); it reads IKSTWSSGPASHTQASL. The region spanning 1565-1632 is the RRM domain; sequence AQKSLHMCVL…HGLVRSDTAH (68 aa). An interaction with the CCR4-NOT complex region spans residues 1596–1690; that stretch reads GQALPPTSSW…PGDLLSGESI (95 aa). The span at 1603–1613 shows a compositional bias: low complexity; it reads SSWQSSSGGSQ.

The protein belongs to the GW182 family. Interacts with one or more of the argonaute family proteins AGO1, AGO2, AGO3 and AGO4. Interacts with CNOT1; the interaction mediates the association with the CCR4-NOT complex. Interacts with PAN3; the interaction mediates the association with the PAN complex.

Functionally, plays a role in RNA-mediated gene silencing by micro-RNAs (miRNAs). Required for miRNA-dependent translational repression of complementary mRNAs by argonaute family proteins As scaffoldng protein associates with argonaute proteins bound to partially complementary mRNAs and simultaneously can recruit CCR4-NOT and PAN deadenylase complexes. The chain is Trinucleotide repeat-containing gene 6C protein (Tnrc6c) from Mus musculus (Mouse).